We begin with the raw amino-acid sequence, 105 residues long: Small ribosomal subunit protein bS18 (105 aa).

The segment at 1-34 (MMINKEQDLNQLETNQEQSVEQNQTDEKRKPKPN) is disordered. Polar residues predominate over residues 9–23 (LNQLETNQEQSVEQN).

The protein belongs to the bacterial ribosomal protein bS18 family. Part of the 30S ribosomal subunit. Forms a tight heterodimer with protein bS6.

Binds as a heterodimer with protein bS6 to the central domain of the 16S rRNA, where it helps stabilize the platform of the 30S subunit. This chain is Small ribosomal subunit protein bS18, found in Mycoplasma genitalium (strain ATCC 33530 / DSM 19775 / NCTC 10195 / G37) (Mycoplasmoides genitalium).